A 305-amino-acid polypeptide reads, in one-letter code: tRNA-cytidine(32) 2-sulfurtransferase (305 aa).

Residues 1 to 20 (MTAVLPLPHPLADPAPRDPR) form a disordered region. The short motif at 59–64 (SGGKDS) is the PP-loop motif element. 3 residues coordinate [4Fe-4S] cluster: C134, C137, and C225. A compositionally biased stretch (low complexity) spans 282–293 (DAPPDLAPDPGA). The tract at residues 282–305 (DAPPDLAPDPGAWLTASDATHDSD) is disordered.

Belongs to the TtcA family. Homodimer. Mg(2+) serves as cofactor. The cofactor is [4Fe-4S] cluster.

It localises to the cytoplasm. It catalyses the reaction cytidine(32) in tRNA + S-sulfanyl-L-cysteinyl-[cysteine desulfurase] + AH2 + ATP = 2-thiocytidine(32) in tRNA + L-cysteinyl-[cysteine desulfurase] + A + AMP + diphosphate + H(+). The protein operates within tRNA modification. Its function is as follows. Catalyzes the ATP-dependent 2-thiolation of cytidine in position 32 of tRNA, to form 2-thiocytidine (s(2)C32). The sulfur atoms are provided by the cysteine/cysteine desulfurase (IscS) system. The polypeptide is tRNA-cytidine(32) 2-sulfurtransferase (Xanthomonas oryzae pv. oryzae (strain MAFF 311018)).